A 510-amino-acid polypeptide reads, in one-letter code: Bifunctional pantoate ligase/cytidylate kinase (510 aa).

Residues 1–276 are pantoate--beta-alanine ligase; the sequence is MNKIIIRKTE…CGKTRLIDHV (276 aa). 29–36 is a binding site for ATP; the sequence is MGNLHDGH. Histidine 36 acts as the Proton donor in catalysis. Glutamine 61 lines the (R)-pantoate pocket. Glutamine 61 contributes to the beta-alanine binding site. An ATP-binding site is contributed by 150-153; sequence GEKD. Residue glutamine 156 participates in (R)-pantoate binding. 187 to 190 contacts ATP; sequence FSSR. Residues 277-510 are cytidylate kinase; that stretch reads FLMKRKPIIA…LNIPKEIQLE (234 aa).

It in the N-terminal section; belongs to the pantothenate synthetase family. In the C-terminal section; belongs to the cytidylate kinase family. Type 1 subfamily.

The protein localises to the cytoplasm. It catalyses the reaction (R)-pantoate + beta-alanine + ATP = (R)-pantothenate + AMP + diphosphate + H(+). The catalysed reaction is CMP + ATP = CDP + ADP. It carries out the reaction dCMP + ATP = dCDP + ADP. It functions in the pathway cofactor biosynthesis; (R)-pantothenate biosynthesis; (R)-pantothenate from (R)-pantoate and beta-alanine: step 1/1. Catalyzes the condensation of pantoate with beta-alanine in an ATP-dependent reaction via a pantoyl-adenylate intermediate. Its function is as follows. Catalyzes the transfer of a phosphate group from ATP to either CMP or dCMP to form CDP or dCDP and ADP, respectively. This chain is Bifunctional pantoate ligase/cytidylate kinase, found in Prochlorococcus marinus subsp. pastoris (strain CCMP1986 / NIES-2087 / MED4).